A 147-amino-acid polypeptide reads, in one-letter code: Large ribosomal subunit protein bL9 (147 aa).

Belongs to the bacterial ribosomal protein bL9 family.

Functionally, binds to the 23S rRNA. This is Large ribosomal subunit protein bL9 from Clostridium botulinum (strain 657 / Type Ba4).